A 357-amino-acid polypeptide reads, in one-letter code: Chorismate synthase (357 aa).

Position 46 (R46) interacts with NADP(+). FMN is bound by residues 123–125, 235–236, G275, 290–294, and R316; these read RSS, NA, and KPTPS.

The protein belongs to the chorismate synthase family. As to quaternary structure, homotetramer. Requires FMNH2 as cofactor.

It carries out the reaction 5-O-(1-carboxyvinyl)-3-phosphoshikimate = chorismate + phosphate. It functions in the pathway metabolic intermediate biosynthesis; chorismate biosynthesis; chorismate from D-erythrose 4-phosphate and phosphoenolpyruvate: step 7/7. Catalyzes the anti-1,4-elimination of the C-3 phosphate and the C-6 proR hydrogen from 5-enolpyruvylshikimate-3-phosphate (EPSP) to yield chorismate, which is the branch point compound that serves as the starting substrate for the three terminal pathways of aromatic amino acid biosynthesis. This reaction introduces a second double bond into the aromatic ring system. In Nitratiruptor sp. (strain SB155-2), this protein is Chorismate synthase.